A 393-amino-acid polypeptide reads, in one-letter code: Probable acetyl-CoA acyltransferase (393 aa).

The active-site Acyl-thioester intermediate is Cys-88. Active-site proton acceptor residues include His-349 and Cys-378.

The protein belongs to the thiolase-like superfamily. Thiolase family.

It localises to the cytoplasm. The catalysed reaction is 2 acetyl-CoA = acetoacetyl-CoA + CoA. The chain is Probable acetyl-CoA acyltransferase from Staphylococcus aureus (strain bovine RF122 / ET3-1).